The sequence spans 320 residues: Cytochrome c biogenesis protein CcsA (320 aa).

Transmembrane regions (helical) follow at residues 9-29 (ILIH…FLTL), 44-64 (GMIV…IYSG), 71-91 (LYES…VCYF), 99-119 (LNAI…SGLL), 144-164 (MVLG…LLVI), 226-246 (IISL…VWAN), 261-281 (WAFI…NINL), and 287-307 (AIVA…VNLL).

This sequence belongs to the CcmF/CycK/Ccl1/NrfE/CcsA family. May interact with Ccs1.

Its subcellular location is the plastid. It is found in the chloroplast thylakoid membrane. In terms of biological role, required during biogenesis of c-type cytochromes (cytochrome c6 and cytochrome f) at the step of heme attachment. This Carica papaya (Papaya) protein is Cytochrome c biogenesis protein CcsA.